The chain runs to 366 residues: A-type ATP synthase subunit C (366 aa).

It belongs to the V-ATPase V0D/AC39 subunit family. As to quaternary structure, has multiple subunits with at least A(3), B(3), C, D, E, F, H, I and proteolipid K(x).

It localises to the cell membrane. Component of the A-type ATP synthase that produces ATP from ADP in the presence of a proton gradient across the membrane. The sequence is that of A-type ATP synthase subunit C from Thermococcus onnurineus (strain NA1).